The following is a 488-amino-acid chain: Germacrene A hydroxylase (488 aa).

Over 1 to 6 (MEVSLT) the chain is Cytoplasmic. The helical; Signal-anchor for type II membrane protein transmembrane segment at 7–23 (TSIALATIVFFLYKLLT) threads the bilayer. The Lumenal portion of the chain corresponds to 24–488 (RPTSSKNRLP…KTELMLVPSF (465 aa)). N-linked (GlcNAc...) asparagine glycosylation is found at Asn-169, Asn-260, Asn-379, and Asn-412. Cys-432 is a heme binding site.

The protein belongs to the cytochrome P450 family. The cofactor is heme. Expressed in leaf primordia.

The protein resides in the endoplasmic reticulum membrane. It carries out the reaction (+)-(R)-germacrene A + 3 reduced [NADPH--hemoprotein reductase] + 3 O2 = germacra-1(10),4,11(13)-trien-12-oate + 3 oxidized [NADPH--hemoprotein reductase] + 4 H2O + 4 H(+). The protein operates within secondary metabolite biosynthesis; terpenoid biosynthesis. Its function is as follows. Involved in the biosynthesis of germacrene-derived sesquiterpene lactones. Catalyzes three consecutive oxidations of germacrene A to produce germacrene A acid. Could also catalyze the three-step oxidation of non-natural substrate amorphadiene to artemisinic acid. This is Germacrene A hydroxylase from Helianthus annuus (Common sunflower).